The primary structure comprises 214 residues: ATP synthase subunit a (214 aa).

Helical transmembrane passes span 9 to 29, 64 to 84, 88 to 108, 121 to 141, 150 to 170, and 182 to 202; these read LDGM…VFMI, IMMV…TYGI, LWVN…SGYI, SGAP…SIMI, LVAN…VLSS, and LIMV…AYIF.

The protein belongs to the ATPase A chain family. As to quaternary structure, F-type ATPases have 2 components, CF(1) - the catalytic core - and CF(0) - the membrane proton channel. CF(1) has five subunits: alpha(3), beta(3), gamma(1), delta(1), epsilon(1). CF(0) has three main subunits: a, b and c.

The protein resides in the mitochondrion inner membrane. In terms of biological role, mitochondrial membrane ATP synthase (F(1)F(0) ATP synthase or Complex V) produces ATP from ADP in the presence of a proton gradient across the membrane which is generated by electron transport complexes of the respiratory chain. F-type ATPases consist of two structural domains, F(1) - containing the extramembraneous catalytic core and F(0) - containing the membrane proton channel, linked together by a central stalk and a peripheral stalk. During catalysis, ATP synthesis in the catalytic domain of F(1) is coupled via a rotary mechanism of the central stalk subunits to proton translocation. Key component of the proton channel; it may play a direct role in the translocation of protons across the membrane. This Albinaria caerulea (Land snail) protein is ATP synthase subunit a (ATP6).